The chain runs to 334 residues: Protein-methionine-sulfoxide reductase catalytic subunit MsrP (334 aa).

Positions 1–44 (MKKNQFLKESDVTAESVFFMKRRQVLKALGISAAALSLPHAAHA) form a signal peptide, tat-type signal. Mo-molybdopterin contacts are provided by residues asparagine 88, 91 to 92 (YE), cysteine 146, threonine 181, asparagine 233, arginine 238, and 249 to 251 (GIK).

It belongs to the MsrP family. In terms of assembly, heterodimer of a catalytic subunit (MsrP) and a heme-binding subunit (MsrQ). Requires Mo-molybdopterin as cofactor. Predicted to be exported by the Tat system. The position of the signal peptide cleavage has not been experimentally proven.

Its subcellular location is the periplasm. It carries out the reaction L-methionyl-[protein] + a quinone + H2O = L-methionyl-(S)-S-oxide-[protein] + a quinol. The catalysed reaction is L-methionyl-[protein] + a quinone + H2O = L-methionyl-(R)-S-oxide-[protein] + a quinol. Functionally, part of the MsrPQ system that repairs oxidized periplasmic proteins containing methionine sulfoxide residues (Met-O), using respiratory chain electrons. Thus protects these proteins from oxidative-stress damage caused by reactive species of oxygen and chlorine generated by the host defense mechanisms. MsrPQ is essential for the maintenance of envelope integrity under bleach stress, rescuing a wide series of structurally unrelated periplasmic proteins from methionine oxidation, including the primary periplasmic chaperone SurA and the lipoprotein Pal. The catalytic subunit MsrP is non-stereospecific, being able to reduce both (R-) and (S-) diastereoisomers of methionine sulfoxide. The protein is Protein-methionine-sulfoxide reductase catalytic subunit MsrP of Escherichia coli O81 (strain ED1a).